The following is a 404-amino-acid chain: Cysteine desulfurase IscS (404 aa).

Pyridoxal 5'-phosphate-binding positions include 75–76 (AT), asparagine 155, glutamine 183, and 203–205 (SAH). An N6-(pyridoxal phosphate)lysine modification is found at lysine 206. Threonine 243 lines the pyridoxal 5'-phosphate pocket. Cysteine 328 functions as the Cysteine persulfide intermediate in the catalytic mechanism. A [2Fe-2S] cluster-binding site is contributed by cysteine 328.

Belongs to the class-V pyridoxal-phosphate-dependent aminotransferase family. NifS/IscS subfamily. Homodimer. Forms a heterotetramer with IscU, interacts with other sulfur acceptors. Pyridoxal 5'-phosphate serves as cofactor.

It is found in the cytoplasm. It carries out the reaction (sulfur carrier)-H + L-cysteine = (sulfur carrier)-SH + L-alanine. It participates in cofactor biosynthesis; iron-sulfur cluster biosynthesis. In terms of biological role, master enzyme that delivers sulfur to a number of partners involved in Fe-S cluster assembly, tRNA modification or cofactor biosynthesis. Catalyzes the removal of elemental sulfur atoms from cysteine to produce alanine. Functions as a sulfur delivery protein for Fe-S cluster synthesis onto IscU, an Fe-S scaffold assembly protein, as well as other S acceptor proteins. The polypeptide is Cysteine desulfurase IscS (Neisseria meningitidis serogroup C / serotype 2a (strain ATCC 700532 / DSM 15464 / FAM18)).